Here is a 460-residue protein sequence, read N- to C-terminus: Nitrogenase iron-iron protein beta chain (460 aa).

[8Fe-7S] cluster-binding residues include Cys20, Cys45, Cys104, and Ser143.

This sequence belongs to the NifD/NifK/NifE/NifN family. Hexamer of two alpha, two beta, and two delta chains. It depends on [8Fe-7S] cluster as a cofactor.

It carries out the reaction N2 + 8 reduced [2Fe-2S]-[ferredoxin] + 16 ATP + 16 H2O = H2 + 8 oxidized [2Fe-2S]-[ferredoxin] + 2 NH4(+) + 16 ADP + 16 phosphate + 6 H(+). This iron-iron protein is part of the nitrogenase complex that catalyzes the key enzymatic reactions in nitrogen fixation. Other nitrogenase complexes utilize a molybdenum-iron protein or a vanadium-iron protein. This is Nitrogenase iron-iron protein beta chain (anfK) from Rhodobacter capsulatus (Rhodopseudomonas capsulata).